Here is a 460-residue protein sequence, read N- to C-terminus: Argininosuccinate lyase (460 aa).

It belongs to the lyase 1 family. Argininosuccinate lyase subfamily.

It localises to the cytoplasm. It catalyses the reaction 2-(N(omega)-L-arginino)succinate = fumarate + L-arginine. It participates in amino-acid biosynthesis; L-arginine biosynthesis; L-arginine from L-ornithine and carbamoyl phosphate: step 3/3. The polypeptide is Argininosuccinate lyase (Campylobacter jejuni subsp. doylei (strain ATCC BAA-1458 / RM4099 / 269.97)).